The following is a 395-amino-acid chain: Flagellin B (395 aa).

It belongs to the bacterial flagellin family.

It localises to the secreted. It is found in the bacterial flagellum. Functionally, flagellin is the subunit protein which polymerizes to form the filaments of bacterial flagella. This is Flagellin B (flaB) from Rhizobium meliloti (Ensifer meliloti).